Here is a 257-residue protein sequence, read N- to C-terminus: PHD finger protein Alfin1 (257 aa).

The tract at residues 145 to 200 (SKDQLTAHNNGSNSKYKSSGKSRQSESQTKGVKMSAPVKEEVDSGEEEEEDDDEQG) is disordered. Positions 153 to 166 (NNGSNSKYKSSGKS) are enriched in low complexity. Positions 187-199 (DSGEEEEEDDDEQ) are enriched in acidic residues. A PHD-type zinc finger spans residues 200-252 (GATCGACGDNYGTDEFWICCDMCEKWFHGKCVKITPAKAEHIKQYKCPGCSIK).

It belongs to the Alfin family. In terms of assembly, interacts with H3K4me3 and to a lesser extent with H3K4me2. In terms of tissue distribution, predominantly expressed in the roots.

The protein resides in the nucleus. Functionally, histone-binding component that specifically recognizes H3 tails trimethylated on 'Lys-4' (H3K4me3), which mark transcription start sites of virtually all active genes. Transcriptional regulator that binds specifically to DNA sequences 5'-GNGGTG-3' or 5'-GTGGNG-3', including promoter elements of the salt-inducible PRP2 gene. Plays a role in salinity tolerance. The polypeptide is PHD finger protein Alfin1 (ALFIN-1) (Medicago sativa (Alfalfa)).